The following is a 228-amino-acid chain: UPF0758 protein MW1604 (228 aa).

Residues 102 to 224 (KITQPSDVAD…FTSLVEAGYF (123 aa)) enclose the MPN domain. Residues histidine 173, histidine 175, and aspartate 186 each coordinate Zn(2+). The JAMM motif motif lies at 173 to 186 (HNHPSGDVTPSQED).

The protein belongs to the UPF0758 family.

In Staphylococcus aureus (strain MW2), this protein is UPF0758 protein MW1604.